A 109-amino-acid polypeptide reads, in one-letter code: MKVLVLFSVLFLTLFSYSSTEAIDEFDSDAEDDMLSLMANEQVRAKACTPRLHDCSHDRHSCCRGELSKDVCYCFYPEGEDKTEVCSCQQPKSHKYIEKVVDKAKTVVG.

Residues 1 to 22 (MKVLVLFSVLFLTLFSYSSTEA) form the signal peptide. A propeptide spanning residues 23-44 (IDEFDSDAEDDMLSLMANEQVR) is cleaved from the precursor. The knottin domain stretch occupies residues 45 to 88 (AKACTPRLHDCSHDRHSCCRGELSKDVCYCFYPEGEDKTEVCSC). 4 disulfide bridges follow: cysteine 48–cysteine 63, cysteine 55–cysteine 72, cysteine 62–cysteine 88, and cysteine 74–cysteine 86. Residues 89–108 (QQPKSHKYIEKVVDKAKTVV) are linear cationic cytotoxin domain.

It belongs to the neurotoxin 19 (CSTX) family. 05 (U4-Lctx) subfamily. Expressed by the venom gland.

The protein localises to the secreted. In terms of biological role, enhances the high-affinity desensitization of human P2RX3 purinoceptors. In Lycosa singoriensis (Wolf spider), this protein is U4-lycotoxin-Ls1b.